A 510-amino-acid polypeptide reads, in one-letter code: uncharacterized protein (510 aa).

Belongs to the phage portal family. PBSX subfamily.

This is an uncharacterized protein from Bacillus subtilis (strain 168).